Here is a 217-residue protein sequence, read N- to C-terminus: DNA repair protein homolog YobH (217 aa).

The UmuC domain maps to methionine 1 to glycine 68.

It belongs to the DNA polymerase type-Y family.

The protein is DNA repair protein homolog YobH (yobH) of Bacillus subtilis (strain 168).